Reading from the N-terminus, the 364-residue chain is DNA replication and repair protein RecF (364 aa).

30-37 (GKNAQGKT) contributes to the ATP binding site.

This sequence belongs to the RecF family.

It is found in the cytoplasm. The RecF protein is involved in DNA metabolism; it is required for DNA replication and normal SOS inducibility. RecF binds preferentially to single-stranded, linear DNA. It also seems to bind ATP. In Geotalea uraniireducens (strain Rf4) (Geobacter uraniireducens), this protein is DNA replication and repair protein RecF.